The chain runs to 157 residues: ATP synthase subunit delta (157 aa).

This sequence belongs to the ATPase delta chain family. As to quaternary structure, F-type ATPases have 2 components, F(1) - the catalytic core - and F(0) - the membrane proton channel. F(1) has five subunits: alpha(3), beta(3), gamma(1), delta(1), epsilon(1). F(0) has three main subunits: a(1), b(2) and c(10-14). The alpha and beta chains form an alternating ring which encloses part of the gamma chain. F(1) is attached to F(0) by a central stalk formed by the gamma and epsilon chains, while a peripheral stalk is formed by the delta and b chains.

It localises to the cell membrane. In terms of biological role, f(1)F(0) ATP synthase produces ATP from ADP in the presence of a proton or sodium gradient. F-type ATPases consist of two structural domains, F(1) containing the extramembraneous catalytic core and F(0) containing the membrane proton channel, linked together by a central stalk and a peripheral stalk. During catalysis, ATP synthesis in the catalytic domain of F(1) is coupled via a rotary mechanism of the central stalk subunits to proton translocation. Functionally, this protein is part of the stalk that links CF(0) to CF(1). It either transmits conformational changes from CF(0) to CF(1) or is implicated in proton conduction. This chain is ATP synthase subunit delta, found in Chloroflexus aggregans (strain MD-66 / DSM 9485).